Reading from the N-terminus, the 140-residue chain is Small ribosomal subunit protein uS12 (140 aa).

2 disordered regions span residues 1–20 (MPTI…VKSD) and 35–55 (QTNV…TMTP). 3-methylthioaspartic acid is present on aspartate 102. A disordered region spans residues 121-140 (DGRMQGRSKYGTKRPKAAKK). Residues 130–140 (YGTKRPKAAKK) are compositionally biased toward basic residues.

The protein belongs to the universal ribosomal protein uS12 family. Part of the 30S ribosomal subunit. Contacts proteins S8 and S17. May interact with IF1 in the 30S initiation complex.

With S4 and S5 plays an important role in translational accuracy. Functionally, interacts with and stabilizes bases of the 16S rRNA that are involved in tRNA selection in the A site and with the mRNA backbone. Located at the interface of the 30S and 50S subunits, it traverses the body of the 30S subunit contacting proteins on the other side and probably holding the rRNA structure together. The combined cluster of proteins S8, S12 and S17 appears to hold together the shoulder and platform of the 30S subunit. This Exiguobacterium sp. (strain ATCC BAA-1283 / AT1b) protein is Small ribosomal subunit protein uS12.